The primary structure comprises 286 residues: Beta-glucanase (286 aa).

An N-terminal signal peptide occupies residues 1–30 (MCTMPLMKLKKMMRRTAFLLSVLIGCSMLG). The region spanning 48–286 (FDYSGLPDPE…DYVRVYRWVE (239 aa)) is the GH16 domain. The active-site Nucleophile is Glu-158. Glu-163 serves as the catalytic Proton donor.

The protein belongs to the glycosyl hydrolase 16 family.

The enzyme catalyses Hydrolysis of (1-&gt;4)-beta-D-glucosidic linkages in beta-D-glucans containing (1-&gt;3)- and (1-&gt;4)-bonds.. In terms of biological role, shows activity on lichenan, beta-glucan and laminarin but not on CMC cellulose or xylan. This chain is Beta-glucanase (bglA), found in Rhodothermus marinus (Rhodothermus obamensis).